Here is a 101-residue protein sequence, read N- to C-terminus: Small ribosomal subunit protein uS14 (101 aa).

Residues 1 to 20 form a disordered region; the sequence is MAKTSAVNRNKMRERMASRD. Residues 11–20 are compositionally biased toward basic and acidic residues; it reads KMRERMASRD.

This sequence belongs to the universal ribosomal protein uS14 family. In terms of assembly, part of the 30S ribosomal subunit. Contacts proteins S3 and S10.

Binds 16S rRNA, required for the assembly of 30S particles and may also be responsible for determining the conformation of the 16S rRNA at the A site. This Granulibacter bethesdensis (strain ATCC BAA-1260 / CGDNIH1) protein is Small ribosomal subunit protein uS14.